Reading from the N-terminus, the 256-residue chain is 3-deoxy-manno-octulosonate cytidylyltransferase (256 aa).

The protein belongs to the KdsB family.

It is found in the cytoplasm. It catalyses the reaction 3-deoxy-alpha-D-manno-oct-2-ulosonate + CTP = CMP-3-deoxy-beta-D-manno-octulosonate + diphosphate. The protein operates within nucleotide-sugar biosynthesis; CMP-3-deoxy-D-manno-octulosonate biosynthesis; CMP-3-deoxy-D-manno-octulosonate from 3-deoxy-D-manno-octulosonate and CTP: step 1/1. Its pathway is bacterial outer membrane biogenesis; lipopolysaccharide biosynthesis. In terms of biological role, activates KDO (a required 8-carbon sugar) for incorporation into bacterial lipopolysaccharide in Gram-negative bacteria. The sequence is that of 3-deoxy-manno-octulosonate cytidylyltransferase from Histophilus somni (strain 129Pt) (Haemophilus somnus).